The chain runs to 116 residues: Large ribosomal subunit protein bL19 (116 aa).

It belongs to the bacterial ribosomal protein bL19 family.

In terms of biological role, this protein is located at the 30S-50S ribosomal subunit interface and may play a role in the structure and function of the aminoacyl-tRNA binding site. The sequence is that of Large ribosomal subunit protein bL19 from Haemophilus ducreyi (strain 35000HP / ATCC 700724).